Here is a 258-residue protein sequence, read N- to C-terminus: Acetylglutamate kinase (258 aa).

Residues 44 to 45 (GG), arginine 66, and asparagine 158 each bind substrate. ATP is bound by residues 181–186 (DVSGIL) and 209–211 (IIT).

The protein belongs to the acetylglutamate kinase family. ArgB subfamily. Homodimer.

It localises to the cytoplasm. The enzyme catalyses N-acetyl-L-glutamate + ATP = N-acetyl-L-glutamyl 5-phosphate + ADP. The protein operates within amino-acid biosynthesis; L-arginine biosynthesis; N(2)-acetyl-L-ornithine from L-glutamate: step 2/4. In terms of biological role, catalyzes the ATP-dependent phosphorylation of N-acetyl-L-glutamate. In Yersinia pestis bv. Antiqua (strain Antiqua), this protein is Acetylglutamate kinase.